A 238-amino-acid polypeptide reads, in one-letter code: Ribonuclease 3 (238 aa).

The 133-residue stretch at 9-141 folds into the RNase III domain; that stretch reads LIDFMEKIGY…VVAAVYIDGG (133 aa). Glu54 contacts Mg(2+). Asp58 is an active-site residue. 2 residues coordinate Mg(2+): Asp127 and Glu130. Glu130 is an active-site residue. Residues 168 to 237 enclose the DRBM domain; the sequence is DYKTSLQEIT…ARRAIEKLKG (70 aa).

The protein belongs to the ribonuclease III family. As to quaternary structure, homodimer. The cofactor is Mg(2+).

It localises to the cytoplasm. The catalysed reaction is Endonucleolytic cleavage to 5'-phosphomonoester.. In terms of biological role, digests double-stranded RNA. Involved in the processing of primary rRNA transcript to yield the immediate precursors to the large and small rRNAs (23S and 16S). Processes some mRNAs, and tRNAs when they are encoded in the rRNA operon. Processes pre-crRNA and tracrRNA of type II CRISPR loci if present in the organism. The sequence is that of Ribonuclease 3 from Pseudothermotoga lettingae (strain ATCC BAA-301 / DSM 14385 / NBRC 107922 / TMO) (Thermotoga lettingae).